The following is an 87-amino-acid chain: Large ribosomal subunit protein bL27 (87 aa).

The tract at residues 1–21 is disordered; it reads MAHKKAGGSSRNGRDSESKRL.

Belongs to the bacterial ribosomal protein bL27 family.

This is Large ribosomal subunit protein bL27 from Paraburkholderia xenovorans (strain LB400).